Reading from the N-terminus, the 522-residue chain is Tetratricopeptide repeat protein 39C (522 aa).

TPR repeat units follow at residues 254 to 287, 292 to 325, and 424 to 457; these read SLFM…AVDQ, HVCL…SRWS, and GLKH…ESCR.

Belongs to the TTC39 family.

The sequence is that of Tetratricopeptide repeat protein 39C (Ttc39c) from Rattus norvegicus (Rat).